The sequence spans 119 residues: MAKVGKLTKLKSAMKKWPSFAKNHHHSTSSAAVSDELSEDNNLHVVYVGQTRRPYMLRPDIISHPLFQELVDRSSSRSIEQDREIVVACEVVLFEHLLWMLKSGQEGGSVEELAEFYTY.

This sequence belongs to the ARG7 family.

May be involved in the regulation of ethylene receptor signaling. Promotes cell expansion and plant growth. This Arabidopsis thaliana (Mouse-ear cress) protein is Auxin-responsive protein SAUR78.